Reading from the N-terminus, the 150-residue chain is Small heat shock protein HspE (150 aa).

Positions 27-137 (VDNGDTYPPY…KPRQIAIDVA (111 aa)) constitute a sHSP domain.

This sequence belongs to the small heat shock protein (HSP20) family.

This is Small heat shock protein HspE (hspE) from Bradyrhizobium diazoefficiens (strain JCM 10833 / BCRC 13528 / IAM 13628 / NBRC 14792 / USDA 110).